We begin with the raw amino-acid sequence, 427 residues long: Pre-mRNA-splicing factor PRP46 (427 aa).

WD repeat units lie at residues 113-153, 156-195, 198-237, 240-281, 283-322, 324-362, and 373-412; these read GHHG…LKVT, AHDMTVRDLAISNRHPYMFSVSEDKTVKCWDLEKNTAIRN, GHLSGVHTVDIHPTVDVVVTAGRDSVVKVWDIRTRLPVMT, GHKG…KVLT, HQRTVRDISVHPSEFSFASACTNDIRSWLLPKGELLTNFV, QDLDVINTVSINQDDVLFAGSDNGSLTFFDYKSGHKYQT, and ESERGILSSTFDGTGLRLLTGETDRTIKIWKQDETASQDT. The disordered stretch occupies residues 404–427; it reads QDETASQDTHPNLPWNPKLDSQRL.

The protein belongs to the WD repeat PRL1/PRL2 family. In terms of assembly, associated with the spliceosome.

It is found in the cytoplasm. It localises to the nucleus. In terms of biological role, involved in pre-mRNA splicing and required for cell cycle progression at G2/M. In Candida glabrata (strain ATCC 2001 / BCRC 20586 / JCM 3761 / NBRC 0622 / NRRL Y-65 / CBS 138) (Yeast), this protein is Pre-mRNA-splicing factor PRP46 (PRP46).